We begin with the raw amino-acid sequence, 108 residues long: MDQFECINVADAHQKLQEKEAVLVDIRDPQSFAMGHAAQAFHLTNDTLGAFMRDNDFDTPVMVMCYHGNSSKGAAQYLLQQGYDVVYSIDGGFEAWQRQFPAEVAYGA.

The region spanning 17–105 (QEKEAVLVDI…WQRQFPAEVA (89 aa)) is the Rhodanese domain. Residue Cys-65 is the Cysteine persulfide intermediate of the active site.

Belongs to the GlpE family.

The protein resides in the cytoplasm. It carries out the reaction thiosulfate + hydrogen cyanide = thiocyanate + sulfite + 2 H(+). It catalyses the reaction thiosulfate + [thioredoxin]-dithiol = [thioredoxin]-disulfide + hydrogen sulfide + sulfite + 2 H(+). Functionally, transferase that catalyzes the transfer of sulfur from thiosulfate to thiophilic acceptors such as cyanide or dithiols. May function in a CysM-independent thiosulfate assimilation pathway by catalyzing the conversion of thiosulfate to sulfite, which can then be used for L-cysteine biosynthesis. This is Thiosulfate sulfurtransferase GlpE from Escherichia coli O127:H6 (strain E2348/69 / EPEC).